Reading from the N-terminus, the 444-residue chain is Glutamyl-tRNA reductase (444 aa).

Residues threonine 49–arginine 52, serine 109, glutamate 114–glutamine 116, and glutamine 120 contribute to the substrate site. Cysteine 50 (nucleophile) is an active-site residue. Glycine 189–serine 194 lines the NADP(+) pocket. The disordered stretch occupies residues lysine 425–glycine 444.

It belongs to the glutamyl-tRNA reductase family. Homodimer.

The enzyme catalyses (S)-4-amino-5-oxopentanoate + tRNA(Glu) + NADP(+) = L-glutamyl-tRNA(Glu) + NADPH + H(+). The protein operates within porphyrin-containing compound metabolism; protoporphyrin-IX biosynthesis; 5-aminolevulinate from L-glutamyl-tRNA(Glu): step 1/2. Catalyzes the NADPH-dependent reduction of glutamyl-tRNA(Glu) to glutamate 1-semialdehyde (GSA). The chain is Glutamyl-tRNA reductase from Pelotomaculum thermopropionicum (strain DSM 13744 / JCM 10971 / SI).